We begin with the raw amino-acid sequence, 81 residues long: Cytochrome b559 subunit alpha (81 aa).

The chain crosses the membrane as a helical span at residues 21–35 (IIHSITIPMLFIAGW). His23 is a binding site for heme.

This sequence belongs to the PsbE/PsbF family. As to quaternary structure, heterodimer of an alpha subunit and a beta subunit. PSII is composed of 1 copy each of membrane proteins PsbA, PsbB, PsbC, PsbD, PsbE, PsbF, PsbH, PsbI, PsbJ, PsbK, PsbL, PsbM, PsbT, PsbX, PsbY, PsbZ, Psb30/Ycf12, peripheral proteins PsbO, CyanoQ (PsbQ), PsbU, PsbV and a large number of cofactors. It forms dimeric complexes. The cofactor is heme b.

Its subcellular location is the cellular thylakoid membrane. In terms of biological role, this b-type cytochrome is tightly associated with the reaction center of photosystem II (PSII). PSII is a light-driven water:plastoquinone oxidoreductase that uses light energy to abstract electrons from H(2)O, generating O(2) and a proton gradient subsequently used for ATP formation. It consists of a core antenna complex that captures photons, and an electron transfer chain that converts photonic excitation into a charge separation. This Microcystis aeruginosa (strain NIES-843 / IAM M-2473) protein is Cytochrome b559 subunit alpha.